We begin with the raw amino-acid sequence, 90 residues long: MDPLKAQQLAAELEVEMMADMYNRMTGACHKKCVPPHYKEAELSKGESVCLDRCVSKYLDIHERMGKKLTELSLQDEELMKKMQQGVTST.

The Twin CX3C motif motif lies at 29–54; sequence CHKKCVPPHYKEAELSKGESVCLDRC. Intrachain disulfides connect Cys-29-Cys-54 and Cys-33-Cys-50.

It belongs to the small Tim family. Heterohexamer; composed of 3 copies of TIMM9 and 3 copies of TIMM10/TIM10A, named soluble 70 kDa complex. The complex forms a 6-bladed alpha-propeller structure and associates with the TIMM22 component of the TIM22 complex. Interacts with multi-pass transmembrane proteins in transit.

It localises to the mitochondrion inner membrane. Mitochondrial intermembrane chaperone that participates in the import and insertion of multi-pass transmembrane proteins into the mitochondrial inner membrane. May also be required for the transfer of beta-barrel precursors from the TOM complex to the sorting and assembly machinery (SAM complex) of the outer membrane. Acts as a chaperone-like protein that protects the hydrophobic precursors from aggregation and guide them through the mitochondrial intermembrane space. The chain is Mitochondrial import inner membrane translocase subunit Tim10-B (timm10-b) from Xenopus laevis (African clawed frog).